A 646-amino-acid polypeptide reads, in one-letter code: Aquaglycerol porin AQY3 (646 aa).

The span at 1-14 (MSYESGRSSSSSES) shows a compositional bias: low complexity. 2 disordered regions span residues 1-68 (MSYE…SRNK) and 175-262 (KNMD…KKRT). The Cytoplasmic segment spans residues 1 to 350 (MSYESGRSSS…AKIRYHMREP (350 aa)). A compositionally biased stretch (basic and acidic residues) spans 19-41 (TLKEEPNGKIAWEESVKKSRENN). Residues 190-201 (TDISRGGSTTSV) show a composition bias toward polar residues. Residues 351-371 (FAEFLGTLVLVIFGVGGNLQA) traverse the membrane as a helical segment. Residues 372 to 383 (TVTKGSGGSYES) are Extracellular-facing. Residues 384 to 404 (LSFAWGFGCMLGVYVAGGISG) traverse the membrane as a helical segment. Over 405–427 (GHINPAVTISMAIFRKFPWKKVP) the chain is Cytoplasmic. The NPA 1 motif lies at 408–410 (NPA). Residues 428-448 (VYIVAQIIGAYFGGAMAYGYF) form a helical membrane-spanning segment. The Extracellular segment spans residues 449-481 (WSSITEFEGGPHIRTTATGACLFTDPKSYVTWR). The helical transmembrane segment at 482 to 502 (NAFFDEFIGASILVGCLMALL) threads the bilayer. Residues 503 to 509 (DDSNAPP) are Cytoplasmic-facing. A helical transmembrane segment spans residues 510 to 530 (GNGMTALIIGFLVAAIGMALG). At 531–569 (YQTSFTINPARDLGPRIFASMIGYGPHAFHLTHWWWTWG) the chain is on the extracellular side. Residues 538 to 540 (NPA) carry the NPA 2 motif. A helical transmembrane segment spans residues 570 to 590 (AWGGPIAGGIAGALIYDIFIF). The Cytoplasmic segment spans residues 591–646 (TGCESPVNYPDNGYIENRVGKLLHAEFHQNDGTVSDESGVNSNSNTGSKKSVPTSS). Positions 621-646 (DGTVSDESGVNSNSNTGSKKSVPTSS) are disordered.

The protein belongs to the MIP/aquaporin (TC 1.A.8) family.

The protein localises to the cell membrane. It carries out the reaction glycerol(in) = glycerol(out). Functionally, channel protein that mediates glycerol entry under ethanol stimulation. Does not seem to mediate glycerol uptake under standard conditions. The chain is Aquaglycerol porin AQY3 from Saccharomyces cerevisiae (strain ATCC 204508 / S288c) (Baker's yeast).